We begin with the raw amino-acid sequence, 87 residues long: U3-theraphotoxin-Hhn1c (87 aa).

Positions 1–24 (MVNMKASMFLTFAGLVLLFVVCHA) are cleaved as a signal peptide. Residues 25 to 52 (SESEEKEFPKEMLSSIFAVDDDFKQEER) constitute a propeptide that is removed on maturation. 3 disulfides stabilise this stretch: cysteine 54/cysteine 67, cysteine 61/cysteine 72, and cysteine 66/cysteine 79.

It belongs to the neurotoxin 10 (Hwtx-1) family. 51 (Hntx-8) subfamily. Hntx-8 sub-subfamily. As to expression, expressed by the venom gland.

Its subcellular location is the secreted. Its function is as follows. Ion channel inhibitor. This Cyriopagopus hainanus (Chinese bird spider) protein is U3-theraphotoxin-Hhn1c.